A 196-amino-acid chain; its full sequence is Small ribosomal subunit protein uS4c (196 aa).

The interval 22 to 42 (TRKTPKSGSNPKKKFHSGKKE) is disordered. An S4 RNA-binding domain is found at 89–169 (MRLDNILFRL…LPKHLTIDTL (81 aa)).

It belongs to the universal ribosomal protein uS4 family. In terms of assembly, part of the 30S ribosomal subunit. Contacts protein S5. The interaction surface between S4 and S5 is involved in control of translational fidelity.

It localises to the plastid. The protein resides in the chloroplast. Functionally, one of the primary rRNA binding proteins, it binds directly to 16S rRNA where it nucleates assembly of the body of the 30S subunit. In terms of biological role, with S5 and S12 plays an important role in translational accuracy. The protein is Small ribosomal subunit protein uS4c (rps4) of Melica altissima (Siberian melic grass).